Consider the following 275-residue polypeptide: S-methyl-5'-thioadenosine phosphorylase (275 aa).

Phosphate-binding positions include S20, 62-63, and 95-96; these read RH and SA. Cystine bridges form between C143–C210, C205–C266, and C264–C267. Position 195 (M195) interacts with substrate. T196 provides a ligand contact to phosphate. 219–221 contributes to the substrate binding site; sequence DYD.

Belongs to the PNP/MTAP phosphorylase family. MTAP subfamily. Homohexamer. Dimer of a homotrimer.

The catalysed reaction is S-methyl-5'-thioadenosine + phosphate = 5-(methylsulfanyl)-alpha-D-ribose 1-phosphate + adenine. Its pathway is amino-acid biosynthesis; L-methionine biosynthesis via salvage pathway; S-methyl-5-thio-alpha-D-ribose 1-phosphate from S-methyl-5'-thioadenosine (phosphorylase route): step 1/1. Catalyzes the reversible phosphorylation of S-methyl-5'-thioadenosine (MTA) to adenine and 5-methylthioribose-1-phosphate. Involved in the breakdown of MTA, a major by-product of polyamine biosynthesis. Responsible for the first step in the methionine salvage pathway after MTA has been generated from S-adenosylmethionine. Has broad substrate specificity with 6-aminopurine nucleosides as preferred substrates. The sequence is that of S-methyl-5'-thioadenosine phosphorylase from Aeropyrum pernix (strain ATCC 700893 / DSM 11879 / JCM 9820 / NBRC 100138 / K1).